A 351-amino-acid chain; its full sequence is N-acetyl-gamma-glutamyl-phosphate reductase (351 aa).

Residue Cys-154 is part of the active site.

It belongs to the NAGSA dehydrogenase family. Type 1 subfamily.

Its subcellular location is the cytoplasm. The catalysed reaction is N-acetyl-L-glutamate 5-semialdehyde + phosphate + NADP(+) = N-acetyl-L-glutamyl 5-phosphate + NADPH + H(+). Its pathway is amino-acid biosynthesis; L-arginine biosynthesis; N(2)-acetyl-L-ornithine from L-glutamate: step 3/4. Catalyzes the NADPH-dependent reduction of N-acetyl-5-glutamyl phosphate to yield N-acetyl-L-glutamate 5-semialdehyde. In Prochlorococcus marinus (strain MIT 9301), this protein is N-acetyl-gamma-glutamyl-phosphate reductase.